Reading from the N-terminus, the 374-residue chain is Phosphate-binding protein PstS1 (374 aa).

Positions 1 to 23 (MKIRLHTLLAVLTAAPLLLAAAG) are cleaved as a signal peptide. Cysteine 24 carries the N-palmitoyl cysteine lipid modification. Residue cysteine 24 is the site of S-diacylglycerol cysteine attachment. Residues 25-48 (GSKPPSGSPETGAGAGTVATTPAS) are disordered. Phosphate is bound by residues 58–60 (STL), serine 88, aspartate 106, and 189–191 (SGD).

It belongs to the PstS family. The complex is composed of two ATP-binding proteins (PstB), two transmembrane proteins (PstC and PstA) and a solute-binding protein (PstS).

Its subcellular location is the cell membrane. The protein resides in the secreted. Functions in inorganic phosphate uptake, a phosphate-binding protein, although probably not the main uptake protein under phosphate starvation. Part of the ABC transporter complex PstSACB involved in phosphate import. Functionally, a host TLR2 agonist (toll-like receptor), requires both host TLR1 and TLR2 as coreceptors. The protein is Phosphate-binding protein PstS1 (pstS1) of Mycobacterium bovis (strain BCG / Pasteur 1173P2).